Consider the following 367-residue polypeptide: UDP-N-acetylglucosamine--N-acetylmuramyl-(pentapeptide) pyrophosphoryl-undecaprenol N-acetylglucosamine transferase (367 aa).

UDP-N-acetyl-alpha-D-glucosamine-binding positions include 15–17 (TGG), Asn-127, Arg-163, Ser-191, Ile-249, and Gln-294.

Belongs to the glycosyltransferase 28 family. MurG subfamily.

It localises to the cell inner membrane. The enzyme catalyses di-trans,octa-cis-undecaprenyl diphospho-N-acetyl-alpha-D-muramoyl-L-alanyl-D-glutamyl-meso-2,6-diaminopimeloyl-D-alanyl-D-alanine + UDP-N-acetyl-alpha-D-glucosamine = di-trans,octa-cis-undecaprenyl diphospho-[N-acetyl-alpha-D-glucosaminyl-(1-&gt;4)]-N-acetyl-alpha-D-muramoyl-L-alanyl-D-glutamyl-meso-2,6-diaminopimeloyl-D-alanyl-D-alanine + UDP + H(+). It functions in the pathway cell wall biogenesis; peptidoglycan biosynthesis. Functionally, cell wall formation. Catalyzes the transfer of a GlcNAc subunit on undecaprenyl-pyrophosphoryl-MurNAc-pentapeptide (lipid intermediate I) to form undecaprenyl-pyrophosphoryl-MurNAc-(pentapeptide)GlcNAc (lipid intermediate II). This chain is UDP-N-acetylglucosamine--N-acetylmuramyl-(pentapeptide) pyrophosphoryl-undecaprenol N-acetylglucosamine transferase, found in Burkholderia pseudomallei (strain 1710b).